A 378-amino-acid polypeptide reads, in one-letter code: Probable 3-hydroxyisobutyryl-CoA hydrolase 3 (378 aa).

Positions 138 and 146 each coordinate substrate.

Belongs to the enoyl-CoA hydratase/isomerase family.

The protein localises to the peroxisome. It carries out the reaction 3-hydroxy-2-methylpropanoyl-CoA + H2O = 3-hydroxy-2-methylpropanoate + CoA + H(+). It functions in the pathway amino-acid degradation; L-valine degradation. Functionally, involved in valine catabolism. In Arabidopsis thaliana (Mouse-ear cress), this protein is Probable 3-hydroxyisobutyryl-CoA hydrolase 3.